Reading from the N-terminus, the 205-residue chain is Small ribosomal subunit protein uS5 (205 aa).

The S5 DRBM domain maps to 49–112 (LVDEVLDINM…VSAKINLVKV (64 aa)).

The protein belongs to the universal ribosomal protein uS5 family. Part of the 30S ribosomal subunit. Contacts protein S4.

In terms of biological role, with S4 and S12 plays an important role in translational accuracy. The protein is Small ribosomal subunit protein uS5 of Methanospirillum hungatei JF-1 (strain ATCC 27890 / DSM 864 / NBRC 100397 / JF-1).